The chain runs to 153 residues: Protein-export protein SecB (153 aa).

It belongs to the SecB family. In terms of assembly, homotetramer, a dimer of dimers. One homotetramer interacts with 1 SecA dimer.

It localises to the cytoplasm. In terms of biological role, one of the proteins required for the normal export of preproteins out of the cell cytoplasm. It is a molecular chaperone that binds to a subset of precursor proteins, maintaining them in a translocation-competent state. It also specifically binds to its receptor SecA. The sequence is that of Protein-export protein SecB from Edwardsiella ictaluri (strain 93-146).